We begin with the raw amino-acid sequence, 315 residues long: Porphobilinogen deaminase (315 aa).

C251 carries the post-translational modification S-(dipyrrolylmethanemethyl)cysteine.

Belongs to the HMBS family. As to quaternary structure, monomer. Dipyrromethane serves as cofactor.

The enzyme catalyses 4 porphobilinogen + H2O = hydroxymethylbilane + 4 NH4(+). Its pathway is porphyrin-containing compound metabolism; protoporphyrin-IX biosynthesis; coproporphyrinogen-III from 5-aminolevulinate: step 2/4. In terms of biological role, tetrapolymerization of the monopyrrole PBG into the hydroxymethylbilane pre-uroporphyrinogen in several discrete steps. This is Porphobilinogen deaminase from Sphingopyxis alaskensis (strain DSM 13593 / LMG 18877 / RB2256) (Sphingomonas alaskensis).